The primary structure comprises 314 residues: Homoserine O-succinyltransferase (314 aa).

The active-site Acyl-thioester intermediate is the C142. The substrate site is built by K163 and S192. Residue H235 is the Proton acceptor of the active site. E237 is a catalytic residue. Residue R249 coordinates substrate.

Belongs to the MetA family.

It is found in the cytoplasm. It catalyses the reaction L-homoserine + succinyl-CoA = O-succinyl-L-homoserine + CoA. It functions in the pathway amino-acid biosynthesis; L-methionine biosynthesis via de novo pathway; O-succinyl-L-homoserine from L-homoserine: step 1/1. Transfers a succinyl group from succinyl-CoA to L-homoserine, forming succinyl-L-homoserine. This Photobacterium profundum (strain SS9) protein is Homoserine O-succinyltransferase.